Here is a 271-residue protein sequence, read N- to C-terminus: 3-methyl-2-oxobutanoate hydroxymethyltransferase 1 (271 aa).

Residues D53 and D92 each contribute to the Mg(2+) site. Residues 53–54 (DS), D92, and K120 contribute to the 3-methyl-2-oxobutanoate site. A Mg(2+)-binding site is contributed by E122. Catalysis depends on E189, which acts as the Proton acceptor.

It belongs to the PanB family. In terms of assembly, homodecamer; pentamer of dimers. The cofactor is Mg(2+).

Its subcellular location is the cytoplasm. It catalyses the reaction 3-methyl-2-oxobutanoate + (6R)-5,10-methylene-5,6,7,8-tetrahydrofolate + H2O = 2-dehydropantoate + (6S)-5,6,7,8-tetrahydrofolate. Its pathway is cofactor biosynthesis; (R)-pantothenate biosynthesis; (R)-pantoate from 3-methyl-2-oxobutanoate: step 1/2. Its function is as follows. Catalyzes the reversible reaction in which hydroxymethyl group from 5,10-methylenetetrahydrofolate is transferred onto alpha-ketoisovalerate to form ketopantoate. In Burkholderia cenocepacia (strain HI2424), this protein is 3-methyl-2-oxobutanoate hydroxymethyltransferase 1.